The following is a 297-amino-acid chain: MDLVNHLTDRLLFAIPKKGRLYSKSVSILNGADITFHRSQRLDIALSTSLPVALVFLPAADIPTFVGEGKCDLGITGVDQVRESNVDVDLAIDLQFGNCKLQVQVPVNGEYKKPEQLIGKTIVTSFVKLAEKYFADLEGTTVEKMTTRIKFVSGSVEASCALGIGDAIVDLVESGETMRAAGLVDIATVLSTSAYLIESKNPKSDKSLIATIKSRIEGVMTAQRFVSCIYNAPEDKLPELLKVTPGRRAPTISKIDDEGWVAVSSMIERKTKGVVLDELKRLGASDIMVFEISNCRV.

An N-acetylmethionine modification is found at M1.

It belongs to the ATP phosphoribosyltransferase family.

It localises to the cytoplasm. It carries out the reaction 1-(5-phospho-beta-D-ribosyl)-ATP + diphosphate = 5-phospho-alpha-D-ribose 1-diphosphate + ATP. The protein operates within amino-acid biosynthesis; L-histidine biosynthesis; L-histidine from 5-phospho-alpha-D-ribose 1-diphosphate: step 1/9. Its function is as follows. Catalyzes the condensation of ATP and 5-phosphoribose 1-diphosphate to form N'-(5'-phosphoribosyl)-ATP (PR-ATP). Has a crucial role in the pathway because the rate of histidine biosynthesis seems to be controlled primarily by regulation of the enzymatic activity. This chain is ATP phosphoribosyltransferase (HIS1), found in Saccharomyces cerevisiae (strain ATCC 204508 / S288c) (Baker's yeast).